A 508-amino-acid chain; its full sequence is Chromosomal replication initiator protein DnaA (508 aa).

The segment at 1–91 (MADDPGSSFT…TDALSRRLGQ (91 aa)) is domain I, interacts with DnaA modulators. Residues 91-167 (QQIQLGVRIA…AIDPAVAAGT (77 aa)) are domain II. The interval 104–152 (DDVEDALIPSAEPFPDTDADLSARRRTDSRASGERGAVTNTQPGWTNYF) is disordered. Basic and acidic residues predominate over residues 124–136 (LSARRRTDSRASG). Residues 141–152 (VTNTQPGWTNYF) are compositionally biased toward polar residues. Positions 168 to 384 (SLNRRYTFDT…GALIRVTAFA (217 aa)) are domain III, AAA+ region. ATP-binding residues include Gly-212, Gly-214, Lys-215, and Thr-216. Residues 385–508 (SLNKTPIDKS…TTRIRQRSKR (124 aa)) are domain IV, binds dsDNA.

The protein belongs to the DnaA family. In terms of assembly, oligomerizes as a right-handed, spiral filament on DNA at oriC.

Its subcellular location is the cytoplasm. Functionally, plays an essential role in the initiation and regulation of chromosomal replication. ATP-DnaA binds to the origin of replication (oriC) to initiate formation of the DNA replication initiation complex once per cell cycle. Binds the DnaA box (a 9 base pair repeat at the origin) and separates the double-stranded (ds)DNA. Forms a right-handed helical filament on oriC DNA; dsDNA binds to the exterior of the filament while single-stranded (ss)DNA is stabiized in the filament's interior. The ATP-DnaA-oriC complex binds and stabilizes one strand of the AT-rich DNA unwinding element (DUE), permitting loading of DNA polymerase. After initiation quickly degrades to an ADP-DnaA complex that is not apt for DNA replication. Binds acidic phospholipids. The chain is Chromosomal replication initiator protein DnaA from Mycobacterium avium.